Consider the following 539-residue polypeptide: Chaperonin GroEL (539 aa).

Residues 29–32 (TIGP), 86–90 (DGTTT), glycine 413, 476–478 (NAA), and aspartate 492 contribute to the ATP site.

This sequence belongs to the chaperonin (HSP60) family. As to quaternary structure, forms a cylinder of 14 subunits composed of two heptameric rings stacked back-to-back. Interacts with the co-chaperonin GroES.

The protein localises to the cytoplasm. The catalysed reaction is ATP + H2O + a folded polypeptide = ADP + phosphate + an unfolded polypeptide.. Functionally, together with its co-chaperonin GroES, plays an essential role in assisting protein folding. The GroEL-GroES system forms a nano-cage that allows encapsulation of the non-native substrate proteins and provides a physical environment optimized to promote and accelerate protein folding. The protein is Chaperonin GroEL of Leuconostoc mesenteroides subsp. mesenteroides (strain ATCC 8293 / DSM 20343 / BCRC 11652 / CCM 1803 / JCM 6124 / NCDO 523 / NBRC 100496 / NCIMB 8023 / NCTC 12954 / NRRL B-1118 / 37Y).